A 518-amino-acid chain; its full sequence is MTAYKPYRHQLRRSLFASTIFPVFLVIIIGLVSFYAIYIWIEHRTIHQHVDESQSSLHHTEKQIQTFITQHNNSFQELDLTNHHDVTATKRGLLKLIHQQPATLYYELSGPNQFITNNYEHLNTKNMYLFSTHQLKFKNSTYMLKIYMANTPRLSEIKKDSRQFALIVDQYDNILYANDDRFTIGEKYRPQQFGFMNESVKLNHADHRLIIYKDIHENIEDGITLLIVMAVVLVLLVIFGFISADNMAKRQTKDIETIIQKIYYAKNRHLGTYTPLKNNSELEEINNYIYDLFESNEQLIHSIEHTERRLRDIQLKEIERQFQPHFLFNTMQTIQYLITLSPKLAQTVVQQLSQMLRYSLRTNSHTVELNEELNYIEQYVAIQNIRFDDMIKLHIESSEEARHQTIGKMMLQPLIENAIKHGRDTESLDITIRLTLARQNLHVLVCDNGIGMSSSRLQYVRQSLNNDVFDTKHLGLNHLHNKAMIQYGSHARLHIFSKRNQGTLICYKIPLSRGNVDV.

Transmembrane regions (helical) follow at residues 20-40 (IFPV…IYIW) and 222-242 (GITL…FGFI). The region spanning 297 to 513 (EQLIHSIEHT…LICYKIPLSR (217 aa)) is the Histidine kinase domain. H325 carries the phosphohistidine; by autocatalysis modification.

Autophosphorylated.

It localises to the cell membrane. It catalyses the reaction ATP + protein L-histidine = ADP + protein N-phospho-L-histidine.. Its function is as follows. Member of the two-component regulatory system HptS/HptR that regulates genes involved in hexose phosphate transport system in response to changes in extracellular phosphate sources. May act as a sensor protein kinase which is autophosphorylated at a histidine residue and transfers its phosphate group to the conserved aspartic acid residue in the regulatory domain of HptS. In turn, HptS antagonizes CcpA-dependent transcription of a subset of CcpA-regulated genes involved in antibiotic susceptibility. The polypeptide is Sensor protein kinase HptS (hptS) (Staphylococcus aureus (strain MSSA476)).